The primary structure comprises 269 residues: Thymidylate synthase (269 aa).

Residues arginine 21 and 125 to 126 each bind dUMP; that span reads RR. Cysteine 145 (nucleophile) is an active-site residue. Residues 171-174, asparagine 182, and 212-214 contribute to the dUMP site; these read RSGD and HVY. Residue aspartate 174 coordinates (6R)-5,10-methylene-5,6,7,8-tetrahydrofolate. Alanine 268 serves as a coordination point for (6R)-5,10-methylene-5,6,7,8-tetrahydrofolate.

Belongs to the thymidylate synthase family. Bacterial-type ThyA subfamily. As to quaternary structure, homodimer.

The protein localises to the cytoplasm. The enzyme catalyses dUMP + (6R)-5,10-methylene-5,6,7,8-tetrahydrofolate = 7,8-dihydrofolate + dTMP. It participates in pyrimidine metabolism; dTTP biosynthesis. Its function is as follows. Catalyzes the reductive methylation of 2'-deoxyuridine-5'-monophosphate (dUMP) to 2'-deoxythymidine-5'-monophosphate (dTMP) while utilizing 5,10-methylenetetrahydrofolate (mTHF) as the methyl donor and reductant in the reaction, yielding dihydrofolate (DHF) as a by-product. This enzymatic reaction provides an intracellular de novo source of dTMP, an essential precursor for DNA biosynthesis. The polypeptide is Thymidylate synthase (Cutibacterium acnes (strain DSM 16379 / KPA171202) (Propionibacterium acnes)).